The following is a 257-amino-acid chain: Flap endonuclease Xni (257 aa).

Asp-109 is a Mg(2+) binding site. The region spanning 165-255 (LKPEQLADYW…FNLQDIRYEK (91 aa)) is the 5'-3' exonuclease domain. K(+) is bound by residues Leu-176, Ala-177, Ile-187, and Ile-190. The tract at residues 189–194 (GIGPKA) is interaction with DNA.

Belongs to the Xni family. Mg(2+) is required as a cofactor. The cofactor is K(+).

Functionally, has flap endonuclease activity. During DNA replication, flap endonucleases cleave the 5'-overhanging flap structure that is generated by displacement synthesis when DNA polymerase encounters the 5'-end of a downstream Okazaki fragment. The sequence is that of Flap endonuclease Xni from Aliivibrio salmonicida (strain LFI1238) (Vibrio salmonicida (strain LFI1238)).